Reading from the N-terminus, the 306-residue chain is 4-diphosphocytidyl-2-C-methyl-D-erythritol kinase (306 aa).

Lys23 is an active-site residue. Residue 108 to 118 (PIAAGIGGGSA) coordinates ATP. The active site involves Asp150.

This sequence belongs to the GHMP kinase family. IspE subfamily.

It carries out the reaction 4-CDP-2-C-methyl-D-erythritol + ATP = 4-CDP-2-C-methyl-D-erythritol 2-phosphate + ADP + H(+). Its pathway is isoprenoid biosynthesis; isopentenyl diphosphate biosynthesis via DXP pathway; isopentenyl diphosphate from 1-deoxy-D-xylulose 5-phosphate: step 3/6. Catalyzes the phosphorylation of the position 2 hydroxy group of 4-diphosphocytidyl-2C-methyl-D-erythritol. The chain is 4-diphosphocytidyl-2-C-methyl-D-erythritol kinase from Rhodopseudomonas palustris (strain BisB18).